Consider the following 360-residue polypeptide: D-alanine--D-alanine ligase (360 aa).

Residues 146-352 enclose the ATP-grasp domain; sequence KLCVADAGIA…FPELAERLLQ (207 aa). 179–234 is a binding site for ATP; it reads EEKFIYPFFVKPANLGSSIGISKVHHREQLPAALKSACSLDSKIVVEKAITGREIE. The Mg(2+) site is built by aspartate 305, glutamate 319, and asparagine 321.

This sequence belongs to the D-alanine--D-alanine ligase family. Mg(2+) serves as cofactor. It depends on Mn(2+) as a cofactor.

Its subcellular location is the cytoplasm. The enzyme catalyses 2 D-alanine + ATP = D-alanyl-D-alanine + ADP + phosphate + H(+). It participates in cell wall biogenesis; peptidoglycan biosynthesis. In terms of biological role, cell wall formation. The protein is D-alanine--D-alanine ligase of Pelodictyon phaeoclathratiforme (strain DSM 5477 / BU-1).